The following is a 319-amino-acid chain: Glutathione synthetase (319 aa).

The ATP-grasp domain maps to 127-311 (KIFVTEFADL…VASLLWDAIE (185 aa)). 153 to 209 (RNEMGDIILKPLYGNGGAGVFHSARDDRNFSSLLEMFGQMFREPYIAQEYLPDVRKG) serves as a coordination point for ATP. Mg(2+) contacts are provided by E282 and N284.

The protein belongs to the prokaryotic GSH synthase family. Mg(2+) serves as cofactor. Mn(2+) is required as a cofactor.

The enzyme catalyses gamma-L-glutamyl-L-cysteine + glycine + ATP = glutathione + ADP + phosphate + H(+). It functions in the pathway sulfur metabolism; glutathione biosynthesis; glutathione from L-cysteine and L-glutamate: step 2/2. The protein is Glutathione synthetase of Agrobacterium fabrum (strain C58 / ATCC 33970) (Agrobacterium tumefaciens (strain C58)).